Consider the following 1207-residue polypeptide: DNA-directed RNA polymerase, mitochondrial (1207 aa).

The transit peptide at 1 to 41 directs the protein to the mitochondrion; sequence MSALRWTRSAAGLGRVLRSPGPHRPPSEEGTFGGFCSSRRS. Disordered regions lie at residues 1 to 48 and 82 to 103; these read MSAL…SPRE and KKVQVDRPPQGHSSRWAQKLEA. 2 PPR repeats span residues 232 to 266 and 267 to 302; these read TLHMYNTVMLGWARKGSFRELVYVFLMLKDAGLSP and DLCSYAAALQCMGRRDQDVRTIQRCLKQMMEEGFQP. The interval 702-724 is disordered; sequence VPPPRSEAPRPARYQLPPGSTPV. The mediates interaction with TEFM stretch occupies residues 773–1207; the sequence is FRGRTYPCPP…QVIRSTYFFS (435 aa). Residues Asp-893, Lys-962, and Asp-1121 contribute to the active site.

The protein belongs to the phage and mitochondrial RNA polymerase family. As to quaternary structure, homodimer. Component of the mitochondrial transcription initiation complex, composed at least of TFB2M, TFAM and POLRMT. In this complex TFAM recruits POLRMT to the promoter whereas TFB2M induces structural changes in POLRMT to enable promoter opening and trapping of the DNA non-template strand. Upon metabolic stress, forms a complex composed of FOXO3, SIRT3 and mitochondrial RNA polymerase POLRMT; the complex is recruited to mtDNA in a SIRT3-dependent manner. Also forms a complex composed of FOXO3, SIRT3, TFAM and POLRMT. Interacts with TFB1M and TFB2M, leading to the stimulation of transcription. Interacts with TEFM. Interacts with MTRES1.

Its subcellular location is the mitochondrion. It carries out the reaction RNA(n) + a ribonucleoside 5'-triphosphate = RNA(n+1) + diphosphate. Functionally, DNA-dependent RNA polymerase catalyzes the transcription of mitochondrial DNA into RNA using the four ribonucleoside triphosphates as substrates. Component of the mitochondrial transcription initiation complex, composed at least of TFB2M, TFAM and POLRMT that is required for basal transcription of mitochondrial DNA. In this complex, TFAM recruits POLRMT to a specific promoter whereas TFB2M induces structural changes in POLRMT to enable promoter opening and trapping of the DNA non-template strand. Has DNA primase activity. Catalyzes the synthesis of short RNA primers that are necessary for the initiation of lagging-strand DNA synthesis from the origin of light-strand DNA replication (OriL). The polypeptide is DNA-directed RNA polymerase, mitochondrial (Mus musculus (Mouse)).